The following is a 186-amino-acid chain: Der GTPase-activating protein YihI (186 aa).

Positions Met-1–Thr-65 are disordered. Composition is skewed to basic and acidic residues over residues Arg-9–Asn-25 and Thr-34–Glu-45.

The protein belongs to the YihI family. In terms of assembly, interacts with Der.

Functionally, a GTPase-activating protein (GAP) that modifies Der/EngA GTPase function. May play a role in ribosome biogenesis. The polypeptide is Der GTPase-activating protein YihI (Histophilus somni (strain 129Pt) (Haemophilus somnus)).